A 57-amino-acid polypeptide reads, in one-letter code: Large ribosomal subunit protein bL32 (57 aa).

Residues 1–23 are disordered; that stretch reads MAVPARHTSSAKKNRRRTHYKLT. Residues 9–20 show a composition bias toward basic residues; the sequence is SSAKKNRRRTHY.

This sequence belongs to the bacterial ribosomal protein bL32 family.

In Lactococcus lactis subsp. cremoris (strain MG1363), this protein is Large ribosomal subunit protein bL32.